The chain runs to 179 residues: Large ribosomal subunit protein uL5 (179 aa).

Belongs to the universal ribosomal protein uL5 family. As to quaternary structure, part of the 50S ribosomal subunit; part of the 5S rRNA/L5/L18/L25 subcomplex. Contacts the 5S rRNA and the P site tRNA. Forms a bridge to the 30S subunit in the 70S ribosome.

Functionally, this is one of the proteins that bind and probably mediate the attachment of the 5S RNA into the large ribosomal subunit, where it forms part of the central protuberance. In the 70S ribosome it contacts protein S13 of the 30S subunit (bridge B1b), connecting the 2 subunits; this bridge is implicated in subunit movement. Contacts the P site tRNA; the 5S rRNA and some of its associated proteins might help stabilize positioning of ribosome-bound tRNAs. The sequence is that of Large ribosomal subunit protein uL5 from Erwinia tasmaniensis (strain DSM 17950 / CFBP 7177 / CIP 109463 / NCPPB 4357 / Et1/99).